The following is a 362-amino-acid chain: 3-dehydroquinate synthase (362 aa).

Belongs to the archaeal-type DHQ synthase family.

It carries out the reaction 2-amino-2,3,7-trideoxy-D-lyxo-hept-6-ulosonate + NAD(+) + H2O = 3-dehydroquinate + NH4(+) + NADH + H(+). Catalyzes the oxidative deamination and cyclization of 2-amino-3,7-dideoxy-D-threo-hept-6-ulosonic acid (ADH) to yield 3-dehydroquinate (DHQ), which is fed into the canonical shikimic pathway of aromatic amino acid biosynthesis. This chain is 3-dehydroquinate synthase, found in Methanothrix thermoacetophila (strain DSM 6194 / JCM 14653 / NBRC 101360 / PT) (Methanosaeta thermophila).